The following is a 1169-amino-acid chain: ATP-dependent helicase/deoxyribonuclease subunit B (1169 aa).

Residues 1 to 285 (MEIQFLAGRS…TIFERNHRHL (285 aa)) form the UvrD-like helicase ATP-binding domain. An ATP-binding site is contributed by 8–15 (GRSGSGKT). One can recognise a UvrD-like helicase C-terminal domain in the interval 280 to 586 (RNHRHLYTPD…KFALIPPSLD (307 aa)). C801, C1121, C1124, and C1130 together coordinate [4Fe-4S] cluster.

Belongs to the helicase family. AddB/RexB type 1 subfamily. Heterodimer of AddA and AddB. Mg(2+) serves as cofactor. The cofactor is [4Fe-4S] cluster.

Its function is as follows. The heterodimer acts as both an ATP-dependent DNA helicase and an ATP-dependent, dual-direction single-stranded exonuclease. Recognizes the chi site generating a DNA molecule suitable for the initiation of homologous recombination. The AddB subunit has 5' -&gt; 3' nuclease activity but not helicase activity. This chain is ATP-dependent helicase/deoxyribonuclease subunit B, found in Bacillus pumilus (strain SAFR-032).